The following is a 201-amino-acid chain: Probable molybdenum cofactor guanylyltransferase (201 aa).

Residues 6 to 8 (LAG), K18, D65, and D97 contribute to the GTP site. Mg(2+) is bound at residue D97.

This sequence belongs to the MobA family. Mg(2+) serves as cofactor.

Its subcellular location is the cytoplasm. The enzyme catalyses Mo-molybdopterin + GTP + H(+) = Mo-molybdopterin guanine dinucleotide + diphosphate. Functionally, transfers a GMP moiety from GTP to Mo-molybdopterin (Mo-MPT) cofactor (Moco or molybdenum cofactor) to form Mo-molybdopterin guanine dinucleotide (Mo-MGD) cofactor. In Staphylococcus epidermidis (strain ATCC 35984 / DSM 28319 / BCRC 17069 / CCUG 31568 / BM 3577 / RP62A), this protein is Probable molybdenum cofactor guanylyltransferase.